A 120-amino-acid polypeptide reads, in one-letter code: NAD(P)H-quinone oxidoreductase subunit 3 (120 aa).

3 helical membrane passes run G6–V26, M64–V84, and L89–A109.

Belongs to the complex I subunit 3 family. In terms of assembly, NDH-1 can be composed of about 15 different subunits; different subcomplexes with different compositions have been identified which probably have different functions.

Its subcellular location is the cellular thylakoid membrane. It carries out the reaction a plastoquinone + NADH + (n+1) H(+)(in) = a plastoquinol + NAD(+) + n H(+)(out). The enzyme catalyses a plastoquinone + NADPH + (n+1) H(+)(in) = a plastoquinol + NADP(+) + n H(+)(out). Functionally, NDH-1 shuttles electrons from an unknown electron donor, via FMN and iron-sulfur (Fe-S) centers, to quinones in the respiratory and/or the photosynthetic chain. The immediate electron acceptor for the enzyme in this species is believed to be plastoquinone. Couples the redox reaction to proton translocation, and thus conserves the redox energy in a proton gradient. Cyanobacterial NDH-1 also plays a role in inorganic carbon-concentration. This is NAD(P)H-quinone oxidoreductase subunit 3 from Prochlorococcus marinus (strain MIT 9313).